We begin with the raw amino-acid sequence, 423 residues long: Histidine--tRNA ligase (423 aa).

The protein belongs to the class-II aminoacyl-tRNA synthetase family. As to quaternary structure, homodimer.

It localises to the cytoplasm. The enzyme catalyses tRNA(His) + L-histidine + ATP = L-histidyl-tRNA(His) + AMP + diphosphate + H(+). In Haemophilus ducreyi (strain 35000HP / ATCC 700724), this protein is Histidine--tRNA ligase.